A 198-amino-acid chain; its full sequence is Ribosome maturation factor RimP (198 aa).

This sequence belongs to the RimP family.

It localises to the cytoplasm. Required for maturation of 30S ribosomal subunits. The chain is Ribosome maturation factor RimP from Agrobacterium fabrum (strain C58 / ATCC 33970) (Agrobacterium tumefaciens (strain C58)).